A 294-amino-acid polypeptide reads, in one-letter code: N-acetylmuramic acid 6-phosphate etherase (294 aa).

The 164-residue stretch at 54–217 (VIQSFEEEGR…STASMIGVGK (164 aa)) folds into the SIS domain. E82 (proton donor) is an active-site residue. Residue E113 is part of the active site.

The protein belongs to the GCKR-like family. MurNAc-6-P etherase subfamily. As to quaternary structure, homodimer.

It carries out the reaction N-acetyl-D-muramate 6-phosphate + H2O = N-acetyl-D-glucosamine 6-phosphate + (R)-lactate. The protein operates within amino-sugar metabolism; N-acetylmuramate degradation. Functionally, specifically catalyzes the cleavage of the D-lactyl ether substituent of MurNAc 6-phosphate, producing GlcNAc 6-phosphate and D-lactate. The protein is N-acetylmuramic acid 6-phosphate etherase of Bacillus cereus (strain AH820).